Consider the following 383-residue polypeptide: S-adenosylmethionine synthase (383 aa).

His-15 is a binding site for ATP. Asp-17 lines the Mg(2+) pocket. Residue Glu-43 coordinates K(+). Residues Glu-56 and Gln-99 each coordinate L-methionine. The interval 99-109 (QSPDINQGVDR) is flexible loop. ATP-binding positions include 164-166 (DAK), 230-231 (RF), Asp-239, 245-246 (RK), Ala-262, and Lys-266. Asp-239 lines the L-methionine pocket. Lys-270 contacts L-methionine.

Belongs to the AdoMet synthase family. As to quaternary structure, homotetramer; dimer of dimers. Mg(2+) is required as a cofactor. K(+) serves as cofactor.

It is found in the cytoplasm. It carries out the reaction L-methionine + ATP + H2O = S-adenosyl-L-methionine + phosphate + diphosphate. It participates in amino-acid biosynthesis; S-adenosyl-L-methionine biosynthesis; S-adenosyl-L-methionine from L-methionine: step 1/1. In terms of biological role, catalyzes the formation of S-adenosylmethionine (AdoMet) from methionine and ATP. The overall synthetic reaction is composed of two sequential steps, AdoMet formation and the subsequent tripolyphosphate hydrolysis which occurs prior to release of AdoMet from the enzyme. In Shewanella putrefaciens (strain CN-32 / ATCC BAA-453), this protein is S-adenosylmethionine synthase.